The following is a 701-amino-acid chain: Peptide transporter 3 (701 aa).

The next 9 membrane-spanning stretches (helical) occupy residues 29–49 (FSFYGMKTILFIYLITEHEFS), 55–75 (FIYHLFTCIAYLTPLIGSIMA), 91–111 (IYVVGHVLLSLGAVPFLSYPI), 119–139 (GLFVIAFATGCIKPCVSAFAA), 154–174 (FSFFYFAINGGSLFAIIITPI), 188–208 (FPLAFGVPGVLMLLALILFLM), 269–289 (GLLNVAVIFCPLIFFWALFDQ), 318–338 (INPVCVLILVPIFEGWVYPAL), and 351–371 (AVGGLLTAFSFAIAGVLQLKV). Residues N391 and N432 are each glycosylated (N-linked (GlcNAc...) asparagine). Helical transmembrane passes span 575–595 (ILWSLPQYIIITLGEVLLSVT), 611–631 (VLTAMWLLTVFAGNLIDMMIS), and 641–661 (LEFFFYSTLMVIVMGVFILLA).

It belongs to the major facilitator superfamily. Proton-dependent oligopeptide transporter (POT/PTR) (TC 2.A.17) family. In terms of tissue distribution, expressed in the AVA interneuron.

Its subcellular location is the membrane. Its function is as follows. Neuron-specific, H(+)-coupled oligopeptide transporter with broad specificity towards di- and tripeptides in a Na(+) and Cl(-)-independent manner. Shows H(+) channel activity in the absence of peptide substrates. This chain is Peptide transporter 3 (pept-3), found in Caenorhabditis elegans.